Here is a 387-residue protein sequence, read N- to C-terminus: Mannose-6-phosphate isomerase (387 aa).

It belongs to the N-acylglucosamine 2-epimerase family.

The enzyme catalyses D-mannose 6-phosphate = D-fructose 6-phosphate. This Rhizobium meliloti (strain 1021) (Ensifer meliloti) protein is Mannose-6-phosphate isomerase (pmi).